We begin with the raw amino-acid sequence, 545 residues long: MATLQGTPVLILKEGTQRTVGRDAQRMNIMAARVIAEAVKSTLGPKGMDKMLVDSLGDVVITNDGVTILKEMDVEHPAAKMIIEVAKTQDNEVGDGTTTAVVLAGELLKKAEELLDQDIHPTVIARGYRMAANKAVEILESIAMDIDVEDEETLKKIAATAITGKHSEYALDHLSSLVVEAVKRVAEKVDDRYKVDEDNIKLEKRQGGSVADTKLVNGIVIDKEVVHPGMPKRVKNAKIAVLKAALEVKETETDAEIRITDPDQLMKFIEQEEKMLKEMVDRLAEAGANVVFCQKGIDDLAQYYLAKAGILAVRRVKQSDIEKIAKACGAKIITDLREITSADLGEAELVEERKVGDEKMVFIEGCKNPKAVTILIRGGSEHVVDEVERSLQDAIKVVKTALESGKVVAGGGAPEIEVALKIRDWAPTLGGREQLAAEAFASALEVIPRALAENSGLDPIDILVELRKAHEEGKTTYGVDVFSGEVACMKERGVLEPLKVKTQAITSATEVAIMILRIDDVIAAKGLEKEKGPEGESGGEEDSEE.

The protein belongs to the TCP-1 chaperonin family. In terms of assembly, forms a Heterooligomeric complex of two stacked eight-membered rings.

In terms of biological role, molecular chaperone; binds unfolded polypeptides in vitro, and has a weak ATPase activity. The protein is Thermosome subunit alpha (thsA) of Archaeoglobus fulgidus (strain ATCC 49558 / DSM 4304 / JCM 9628 / NBRC 100126 / VC-16).